A 252-amino-acid chain; its full sequence is Triosephosphate isomerase (252 aa).

9-11 (NWK) is a substrate binding site. His-96 functions as the Electrophile in the catalytic mechanism. The active-site Proton acceptor is the Glu-166. Substrate-binding positions include Gly-172, Ser-212, and 233–234 (GG).

It belongs to the triosephosphate isomerase family. Homodimer.

The protein resides in the cytoplasm. It catalyses the reaction D-glyceraldehyde 3-phosphate = dihydroxyacetone phosphate. It functions in the pathway carbohydrate biosynthesis; gluconeogenesis. It participates in carbohydrate degradation; glycolysis; D-glyceraldehyde 3-phosphate from glycerone phosphate: step 1/1. In terms of biological role, involved in the gluconeogenesis. Catalyzes stereospecifically the conversion of dihydroxyacetone phosphate (DHAP) to D-glyceraldehyde-3-phosphate (G3P). The chain is Triosephosphate isomerase from Prosthecochloris aestuarii (strain DSM 271 / SK 413).